Here is a 166-residue protein sequence, read N- to C-terminus: Large ribosomal subunit protein mL41 (166 aa).

The transit peptide at methionine 1–glutamate 26 directs the protein to the mitochondrion. The disordered stretch occupies residues lysine 136–phenylalanine 166.

It belongs to the mitochondrion-specific ribosomal protein mL41 family. As to quaternary structure, component of the mitochondrial ribosome large subunit (39S) which comprises a 16S rRNA and about 50 distinct proteins.

The protein localises to the mitochondrion. In Drosophila melanogaster (Fruit fly), this protein is Large ribosomal subunit protein mL41 (mRpL41).